The sequence spans 530 residues: MVDDKEKNMKCLTFFLMLPETVKNRSKKGSKKANSSGGGGGGGSVGSGSSKLPPVCYEIITLKTKKKKKMAADIFPRKKPANSSSTTVQQQHQHNLCNNNLIPAPNWQGLYPTIRERNAVMFNNDLMADVHFVVGPPGGTQRLPGHKYVLAVGSSVFHAMFYGELAEDKDEIRIPDVEPAAFLAMLKYIYCDEIDLAADTVLATLYAAKKYIVPHLARACVNFLETSLSAKNACVLLSQSCLFEEPDLTQRCWEVIDAQAELALKSEGFCDIDFQTLESILRRETLNAKEIVVFEAALNWAEVECQRQDLALSIENKRKVLGKALYLIRIPTMALDDFANGAAQSGVLTLNETNDIFLWYTASKKPELQFVSKARKGLVPQRCHRFQSCAYRSNQWRYRGRCDSIQFAVDKRVFIAGFGLYGSSCGSAEYSAKIELKRQGVVLGQNLSKYFSDGSSNTFPVWFEYPVQIEPDTFYTASVVLDGNELSYFGQEGMTEVQCGKVTVQFQCSSDSTNGTGVQGGQIPELIFYA.

Positions 23 to 48 are disordered; sequence KNRSKKGSKKANSSGGGGGGGSVGSG. The span at 36-46 shows a compositional bias: gly residues; it reads SGGGGGGGSVG. The region spanning 128 to 198 is the BTB domain; sequence ADVHFVVGPP…IYCDEIDLAA (71 aa). The 66-residue stretch at 243–308 folds into the BACK domain; it reads FEEPDLTQRC…NWAEVECQRQ (66 aa).

As to expression, in the somatosensory cortex, specifically expressed in spiny stellate neurons during barrel formation. Also expressed in the olfactory bulb, piriform cortex and hippocampus.

Its subcellular location is the cytoplasm. The protein localises to the cytosol. It is found in the nucleus. In terms of biological role, acts as a key regulator of dendritic field orientation during development of sensory cortex. Also directs dendrites toward active axon terminals when ectopically expressed. In Mus musculus (Mouse), this protein is BTB/POZ domain-containing protein 3 (Btbd3).